Consider the following 1107-residue polypeptide: Phospholipid-transporting ATPase 2 (1107 aa).

The Cytoplasmic segment spans residues 1-33; it reads MKRFVYINDDEASKELCCDNRISNRKYTLWNFL. Residues 34–55 form a helical membrane-spanning segment; it reads PKNLWEQFSRFMNQYFLLIACL. Residues 56-60 lie on the Extracellular side of the membrane; it reads QLWSL. The chain crosses the membrane as a helical span at residues 61 to 83; it reads ITPVNPASTWGPLIFIFAVSASK. At 84–268 the chain is on the cytoplasmic side; it reads EAWDDYHRYL…TAMDAMIDKL (185 aa). A helical transmembrane segment spans residues 269 to 290; that stretch reads TGAIFVFQIVVVLVLGIAGNVW. Residues 291–315 are Extracellular-facing; sequence KDTEARKQWYVQYPEEAPWYELLVI. A helical membrane pass occupies residues 316–333; the sequence is PLRFELLCSIMIPISIKV. At 334-807 the chain is on the cytoplasmic side; the sequence is SLDLVKGLYA…HGRYSYNRTA (474 aa). D381 (4-aspartylphosphate intermediate) is an active-site residue. Mg(2+) is bound by residues D752 and D756. Residues 808–827 form a helical membrane-spanning segment; it reads FLSQYSFYKSLLICFIQIFF. Over 828 to 841 the chain is Extracellular; sequence SFISGVSGTSLFNS. A helical membrane pass occupies residues 842–860; it reads VSLMAYNVFYTSVPVLVSV. Residues 861–890 are Cytoplasmic-facing; the sequence is IDKDLSEASVMQHPQILFYCQAGRLLNPST. Residues 891-912 traverse the membrane as a helical segment; the sequence is FAGWFGRSLFHAIIVFVITIHA. Residues 913 to 919 are Extracellular-facing; sequence YAYEKSE. A helical membrane pass occupies residues 920-942; it reads MEELGMVALSGCIWLQAFVVAQE. At 943–948 the chain is on the cytoplasmic side; it reads TNSFTV. Residues 949-969 traverse the membrane as a helical segment; sequence LQHLSIWGNLVGFYAINFLFS. At 970 to 982 the chain is on the extracellular side; it reads AIPSSGMYTIMFR. Residues 983–1007 form a helical membrane-spanning segment; that stretch reads LCSQPSYWITMFLIVGAGMGPIFAL. Residues 1008–1107 are Cytoplasmic-facing; it reads KYFRYTYRPS…SGYTRNCKDN (100 aa). The segment at 1048 to 1075 is disordered; the sequence is DLSPISITQPKNRSPVYEPLLSDSPNAT. The residue at position 1050 (S1050) is a Phosphoserine.

Belongs to the cation transport ATPase (P-type) (TC 3.A.3) family. Type IV subfamily. In terms of assembly, interacts with ALIS1, ALIS3 and ALIS5 in a heterologous system.

Its subcellular location is the endoplasmic reticulum membrane. It is found in the prevacuolar compartment membrane. It catalyses the reaction ATP + H2O + phospholipidSide 1 = ADP + phosphate + phospholipidSide 2.. In terms of biological role, involved in transport of phospholipids. Contributes to transmembrane flipping of lipids. Requires an interaction with a protein of the ALIS family for activity. Specific for phosphatidylserine and has no activity with lysolipid, phosphatidylcholine or phosphatidylethanolamine. This is Phospholipid-transporting ATPase 2 from Arabidopsis thaliana (Mouse-ear cress).